The primary structure comprises 212 residues: Inner membrane-spanning protein YciB (212 aa).

The next 5 membrane-spanning stretches (helical) occupy residues 49 to 69 (APVL…VLYL), 78 to 98 (TMLW…IWFH), 105 to 125 (WKPS…PIVA), 150 to 170 (LAWA…AYNF), and 178 to 198 (FKAF…GLYM).

This sequence belongs to the YciB family.

It localises to the cell inner membrane. In terms of biological role, plays a role in cell envelope biogenesis, maintenance of cell envelope integrity and membrane homeostasis. This chain is Inner membrane-spanning protein YciB, found in Leptothrix cholodnii (strain ATCC 51168 / LMG 8142 / SP-6) (Leptothrix discophora (strain SP-6)).